The following is an 845-amino-acid chain: Complement component C7 (845 aa).

The first 22 residues, Met-1 to Ala-22, serve as a signal peptide directing secretion. The TSP type-1 1 domain occupies Asn-27–Pro-80. 6 cysteine pairs are disulfide-bonded: Cys-28–Cys-63, Cys-39–Cys-73, Cys-42–Cys-79, Cys-85–Cys-96, Cys-91–Cys-109, and Cys-103–Cys-119. In terms of domain architecture, LDL-receptor class A spans Gly-84 to Glu-120. The region spanning Val-122 to His-456 is the MACPF domain. Asn-124 carries an N-linked (GlcNAc...) asparagine glycan. Residues Cys-127 and Cys-164 are joined by a disulfide bond. N-linked (GlcNAc...) asparagine glycosylation is present at Asn-201. Disulfide bonds link Cys-336–Cys-353, Cys-433–Cys-560, Cys-455–Cys-505, Cys-457–Cys-473, Cys-460–Cys-475, Cys-477–Cys-486, Cys-512–Cys-545, Cys-523–Cys-535, Cys-571–Cys-613, Cys-599–Cys-626, Cys-631–Cys-673, Cys-659–Cys-688, Cys-703–Cys-714, Cys-716–Cys-751, Cys-722–Cys-744, Cys-729–Cys-764, Cys-774–Cys-783, Cys-777–Cys-790, Cys-792–Cys-826, Cys-798–Cys-819, and Cys-806–Cys-839. The EGF-like domain maps to Cys-457–Glu-487. Positions Asp-500–Asp-549 constitute a TSP type-1 2 domain. CCP regions lie at residues Cys-545–Glu-615 and Asp-616–Thr-693. Sushi domains lie at Glu-569–Lys-628 and Leu-629–Gln-690. 2 factor I module (FIM) regions span residues Thr-695 to Glu-771 and Lys-772 to Ala-844. N-linked (GlcNAc...) asparagine glycosylation is present at Asn-755.

This sequence belongs to the complement C6/C7/C8/C9 family. Monomer or dimer; as a C5b-7 complex it can also form multimeric rosettes. Component of the membrane attack complex (MAC), composed of complement C5b, C6, C7, C8A, C8B, C8G and multiple copies of the pore-forming subunit C9. In terms of processing, C-, N- and O-glycosylated. O-glycosylated with core 1 or possibly core 8 glycans.

It localises to the secreted. Its subcellular location is the target cell membrane. Membrane attack complex (MAC) assembly is inhibited by CD59, thereby protecting self-cells from damage during complement activation. MAC assembly is also inhibited by clusterin (CLU) chaperones that inhibit polymerization of C9. Its function is as follows. Component of the membrane attack complex (MAC), a multiprotein complex activated by the complement cascade, which inserts into a target cell membrane and forms a pore, leading to target cell membrane rupture and cell lysis. The MAC is initiated by proteolytic cleavage of C5 into complement C5b in response to the classical, alternative, lectin and GZMK complement pathways. The complement pathways consist in a cascade of proteins that leads to phagocytosis and breakdown of pathogens and signaling that strengthens the adaptive immune system. C7 serves as a membrane anchor. During MAC assembly, associates with C5b and C6 to form the C5b-7 complex, a key lipophilic precursor of the MAC complex, which associates with the outer leaflet and reduces the energy for membrane bending. The protein is Complement component C7 of Mus musculus (Mouse).